Here is a 373-residue protein sequence, read N- to C-terminus: Probable quinol oxidase subunit 2 (373 aa).

The N-terminal stretch at 1–19 is a signal peptide; that stretch reads MSKFKSLLLLFGSLILLSG. Cys20 is lipidated: N-palmitoyl cysteine. Cys20 carries the S-diacylglycerol cysteine lipid modification. Helical transmembrane passes span 38–58 and 82–102; these read FLIM…LILF and LETI…IPTV. Basic and acidic residues-rich tracts occupy residues 292 to 320 and 339 to 373; these read EERT…ERHG and EESH…GGGH. The tract at residues 292–373 is disordered; sequence EERTADVLDK…KKDHENGGGH (82 aa).

It belongs to the cytochrome c oxidase subunit 2 family.

The protein resides in the cell membrane. The enzyme catalyses 2 a quinol + O2 = 2 a quinone + 2 H2O. Its function is as follows. Catalyzes quinol oxidation with the concomitant reduction of oxygen to water. Subunit II transfers the electrons from a quinol to the binuclear center of the catalytic subunit I. The chain is Probable quinol oxidase subunit 2 (qoxA) from Staphylococcus saprophyticus subsp. saprophyticus (strain ATCC 15305 / DSM 20229 / NCIMB 8711 / NCTC 7292 / S-41).